Consider the following 184-residue polypeptide: Probable chemoreceptor glutamine deamidase CheD (184 aa).

The protein belongs to the CheD family.

The catalysed reaction is L-glutaminyl-[protein] + H2O = L-glutamyl-[protein] + NH4(+). Functionally, probably deamidates glutamine residues to glutamate on methyl-accepting chemotaxis receptors (MCPs), playing an important role in chemotaxis. The polypeptide is Probable chemoreceptor glutamine deamidase CheD (Rhizobium leguminosarum bv. trifolii (strain WSM2304)).